We begin with the raw amino-acid sequence, 177 residues long: MAEFATIARPYAKALFGLAQEKNQIESWLGGLEKLAAVVQEGKVASLIDRPETNASEKADILIDLVGLKDKELKNFVIVLAGQKRLSILPEVYAQYQDLTLSFNHIKSAVIYSAYPLTDKQVGELVQMLNKRFDSELKISVEIEPELIGGIKVEVGDQVLDLSVQGKLSALYTTMTN.

It belongs to the ATPase delta chain family. In terms of assembly, F-type ATPases have 2 components, F(1) - the catalytic core - and F(0) - the membrane proton channel. F(1) has five subunits: alpha(3), beta(3), gamma(1), delta(1), epsilon(1). F(0) has three main subunits: a(1), b(2) and c(10-14). The alpha and beta chains form an alternating ring which encloses part of the gamma chain. F(1) is attached to F(0) by a central stalk formed by the gamma and epsilon chains, while a peripheral stalk is formed by the delta and b chains.

The protein localises to the cell inner membrane. Its function is as follows. F(1)F(0) ATP synthase produces ATP from ADP in the presence of a proton or sodium gradient. F-type ATPases consist of two structural domains, F(1) containing the extramembraneous catalytic core and F(0) containing the membrane proton channel, linked together by a central stalk and a peripheral stalk. During catalysis, ATP synthesis in the catalytic domain of F(1) is coupled via a rotary mechanism of the central stalk subunits to proton translocation. Functionally, this protein is part of the stalk that links CF(0) to CF(1). It either transmits conformational changes from CF(0) to CF(1) or is implicated in proton conduction. This is ATP synthase subunit delta from Neisseria meningitidis serogroup B (strain ATCC BAA-335 / MC58).